The primary structure comprises 498 residues: Neoxanthin synthase, chloroplastic (498 aa).

The N-terminal 33 residues, 1–33 (METLLKPLTSLLLSSPTPHRSIFQQNPPSLNPT), are a transit peptide targeting the chloroplast. Residues 16 to 38 (PTPHRSIFQQNPPSLNPTTKKKS) form a disordered region. Positions 22–33 (IFQQNPPSLNPT) are enriched in polar residues. 84-112 (VIIIGAGPAGLRLAEHVSKYGIKVCCVDP) contributes to the NAD(+) binding site.

It belongs to the lycopene cyclase family.

Its subcellular location is the plastid. It localises to the chloroplast. The catalysed reaction is all-trans-violaxanthin = all-trans-neoxanthin. It functions in the pathway carotenoid biosynthesis; neoxanthin biosynthesis. In terms of biological role, involved in the synthesis of neoxanthin, the last product of carotenoid synthesis and a precursor of abscisic acid. The polypeptide is Neoxanthin synthase, chloroplastic (NXS) (Solanum tuberosum (Potato)).